The following is a 122-amino-acid chain: MIQVQSRLNVADNSGARLVQCIKVVGGSRRRYASVGDIIVVAVKDALPTSVIKKGSVEKAVIVRVSKEYRRVDGTYIRFDDNACVVIDANGNPKGKRIFGPVARELRDMDFTKIVSLAPEVL.

This sequence belongs to the universal ribosomal protein uL14 family. Part of the 50S ribosomal subunit. Forms a cluster with proteins L3 and L19. In the 70S ribosome, L14 and L19 interact and together make contacts with the 16S rRNA in bridges B5 and B8. Interacts with ribosomal silencing factor RsfS, which may inhibit ribosomal subunit association.

Its function is as follows. Binds to 23S rRNA. Forms part of two intersubunit bridges in the 70S ribosome. In Treponema pallidum (strain Nichols), this protein is Large ribosomal subunit protein uL14.